The sequence spans 100 residues: Urease subunit gamma (100 aa).

The protein belongs to the urease gamma subunit family. Heterotrimer of UreA (gamma), UreB (beta) and UreC (alpha) subunits. Three heterotrimers associate to form the active enzyme.

It localises to the cytoplasm. It catalyses the reaction urea + 2 H2O + H(+) = hydrogencarbonate + 2 NH4(+). It functions in the pathway nitrogen metabolism; urea degradation; CO(2) and NH(3) from urea (urease route): step 1/1. The sequence is that of Urease subunit gamma from Prochlorococcus marinus subsp. pastoris (strain CCMP1986 / NIES-2087 / MED4).